The chain runs to 315 residues: Ribosomal RNA small subunit methyltransferase H (315 aa).

Residues Gly37–His39, Asp57, Phe83, Asp105, and Gln112 contribute to the S-adenosyl-L-methionine site.

This sequence belongs to the methyltransferase superfamily. RsmH family.

It is found in the cytoplasm. It catalyses the reaction cytidine(1402) in 16S rRNA + S-adenosyl-L-methionine = N(4)-methylcytidine(1402) in 16S rRNA + S-adenosyl-L-homocysteine + H(+). Functionally, specifically methylates the N4 position of cytidine in position 1402 (C1402) of 16S rRNA. The protein is Ribosomal RNA small subunit methyltransferase H of Pseudomonas fluorescens (strain ATCC BAA-477 / NRRL B-23932 / Pf-5).